Here is a 306-residue protein sequence, read N- to C-terminus: Dihydroorotate dehydrogenase B (NAD(+)), catalytic subunit (306 aa).

FMN is bound by residues Ser23 and 47–48; that span reads KS. Residues Lys47, 71 to 75, and Asn130 each bind substrate; that span reads NAMGL. Asn130 serves as a coordination point for FMN. Cys133 serves as the catalytic Nucleophile. Lys168 and Ile194 together coordinate FMN. Residue 195–196 participates in substrate binding; sequence NT. FMN contacts are provided by residues Gly220, 246–247, and 268–269; these read GG and GS.

Belongs to the dihydroorotate dehydrogenase family. Type 1 subfamily. In terms of assembly, heterotetramer of 2 PyrK and 2 PyrD type B subunits. It depends on FMN as a cofactor.

It is found in the cytoplasm. The enzyme catalyses (S)-dihydroorotate + NAD(+) = orotate + NADH + H(+). It functions in the pathway pyrimidine metabolism; UMP biosynthesis via de novo pathway; orotate from (S)-dihydroorotate (NAD(+) route): step 1/1. Its function is as follows. Catalyzes the conversion of dihydroorotate to orotate with NAD(+) as electron acceptor. This is Dihydroorotate dehydrogenase B (NAD(+)), catalytic subunit (pyrD) from Methanocaldococcus jannaschii (strain ATCC 43067 / DSM 2661 / JAL-1 / JCM 10045 / NBRC 100440) (Methanococcus jannaschii).